A 367-amino-acid chain; its full sequence is Protein-glutamate methylesterase/protein-glutamine glutaminase 2 (367 aa).

Residues Arg15 to Glu132 enclose the Response regulatory domain. Asp66 carries the post-translational modification 4-aspartylphosphate. In terms of domain architecture, CheB-type methylesterase spans Lys172–Arg367. Catalysis depends on residues Ser184, His211, and Asp311.

This sequence belongs to the CheB family. Phosphorylated by CheA. Phosphorylation of the N-terminal regulatory domain activates the methylesterase activity.

Its subcellular location is the cytoplasm. The enzyme catalyses [protein]-L-glutamate 5-O-methyl ester + H2O = L-glutamyl-[protein] + methanol + H(+). It catalyses the reaction L-glutaminyl-[protein] + H2O = L-glutamyl-[protein] + NH4(+). Functionally, involved in chemotaxis. Part of a chemotaxis signal transduction system that modulates chemotaxis in response to various stimuli. Catalyzes the demethylation of specific methylglutamate residues introduced into the chemoreceptors (methyl-accepting chemotaxis proteins or MCP) by CheR. Also mediates the irreversible deamidation of specific glutamine residues to glutamic acid. The sequence is that of Protein-glutamate methylesterase/protein-glutamine glutaminase 2 from Methanosarcina mazei (strain ATCC BAA-159 / DSM 3647 / Goe1 / Go1 / JCM 11833 / OCM 88) (Methanosarcina frisia).